The sequence spans 150 residues: MTTRNLTDEQIAEFREAFSLFDRDQDGNITSNELGVVMRSLGQSPTAAELQDMINEVDADGNGTIDFTEFLTMMARKMKDTDNEEEVREAFKVFDKDGNGYITVEELTHVLTSLGERLSQEEVADMIREADTDGDGVINYEEFSRVISSK.

EF-hand domains are found at residues 9–44 (EQIA…LGQS), 45–80 (PTAA…KMKD), 82–117 (DNEE…LGER), and 118–150 (LSQE…ISSK). Ca(2+) is bound by residues Asp22, Asp24, Asp26, Asn28, Glu33, Asp58, Asp60, Asn62, Thr64, Glu69, Asp95, Asp97, Asn99, Tyr101, Glu106, Asp131, Asp133, Asp135, and Glu142.

This sequence belongs to the calmodulin family. As to quaternary structure, interacts with rng2.

It localises to the cytoplasm. Its subcellular location is the cytoskeleton. It is found in the microtubule organizing center. The protein localises to the spindle pole body. In terms of biological role, calmodulin mediates the control of a large number of enzymes, ion channels and other proteins by Ca(2+). Among the enzymes to be stimulated by the calmodulin-Ca(2+) complex are a number of protein kinases and phosphatases. The protein is Calmodulin (cam1) of Schizosaccharomyces pombe (strain 972 / ATCC 24843) (Fission yeast).